Consider the following 232-residue polypeptide: Ureidoacrylate amidohydrolase RutB (232 aa).

Aspartate 26 serves as the catalytic Proton acceptor. Lysine 135 is a catalytic residue. Residue cysteine 168 is the Nucleophile of the active site.

The protein belongs to the isochorismatase family. RutB subfamily.

The enzyme catalyses (Z)-3-ureidoacrylate + H2O + H(+) = (Z)-3-aminoacrylate + NH4(+) + CO2. It catalyses the reaction (Z)-3-ureidoacrylate + H2O = (Z)-3-aminoacrylate + carbamate + H(+). It carries out the reaction (Z)-2-methylureidoacrylate + H2O + H(+) = (Z)-2-methylaminoacrylate + NH4(+) + CO2. Its function is as follows. Hydrolyzes ureidoacrylate to form aminoacrylate and carbamate. The carbamate hydrolyzes spontaneously, thereby releasing one of the nitrogen atoms of the pyrimidine ring as ammonia and one of its carbon atoms as CO2. The polypeptide is Ureidoacrylate amidohydrolase RutB (Cronobacter sakazakii (strain ATCC BAA-894) (Enterobacter sakazakii)).